Here is a 547-residue protein sequence, read N- to C-terminus: Glucose-6-phosphate isomerase (547 aa).

Glu-356 (proton donor) is an active-site residue. Active-site residues include His-387 and Lys-508.

This sequence belongs to the GPI family.

Its subcellular location is the cytoplasm. The catalysed reaction is alpha-D-glucose 6-phosphate = beta-D-fructose 6-phosphate. The protein operates within carbohydrate biosynthesis; gluconeogenesis. Its pathway is carbohydrate degradation; glycolysis; D-glyceraldehyde 3-phosphate and glycerone phosphate from D-glucose: step 2/4. In terms of biological role, catalyzes the reversible isomerization of glucose-6-phosphate to fructose-6-phosphate. This Cupriavidus taiwanensis (strain DSM 17343 / BCRC 17206 / CCUG 44338 / CIP 107171 / LMG 19424 / R1) (Ralstonia taiwanensis (strain LMG 19424)) protein is Glucose-6-phosphate isomerase.